Reading from the N-terminus, the 362-residue chain is tRNA-specific 2-thiouridylase MnmA (362 aa).

ATP is bound by residues 9 to 16 (GMSGGVDS) and M35. The tract at residues 95-97 (NPD) is interaction with target base in tRNA. C100 functions as the Nucleophile in the catalytic mechanism. Cysteines 100 and 197 form a disulfide. Position 124 (G124) interacts with ATP. The tract at residues 147-149 (KDQ) is interaction with tRNA. Catalysis depends on C197, which acts as the Cysteine persulfide intermediate. The tract at residues 309-310 (RY) is interaction with tRNA.

The protein belongs to the MnmA/TRMU family.

The protein localises to the cytoplasm. It carries out the reaction S-sulfanyl-L-cysteinyl-[protein] + uridine(34) in tRNA + AH2 + ATP = 2-thiouridine(34) in tRNA + L-cysteinyl-[protein] + A + AMP + diphosphate + H(+). Its function is as follows. Catalyzes the 2-thiolation of uridine at the wobble position (U34) of tRNA, leading to the formation of s(2)U34. The protein is tRNA-specific 2-thiouridylase MnmA of Cupriavidus pinatubonensis (strain JMP 134 / LMG 1197) (Cupriavidus necator (strain JMP 134)).